The following is a 425-amino-acid chain: Polyribonucleotide 5'-hydroxyl-kinase Clp1 (425 aa).

ATP is bound by residues Glu22, Lys62, and 124 to 129; that span reads DVGKST.

The protein belongs to the Clp1 family. Clp1 subfamily. Component of the tRNA splicing endonuclease complex. Component of pre-mRNA cleavage complex II (CF-II).

The protein localises to the nucleus. The enzyme catalyses a 5'-end dephospho-2'-deoxyribonucleoside-DNA + ATP = a 5'-end 5'-phospho-2'-deoxyribonucleoside-DNA + ADP + H(+). It carries out the reaction a 5'-end dephospho-ribonucleoside-RNA + ATP = a 5'-end 5'-phospho-ribonucleoside-RNA + ADP + H(+). Polynucleotide kinase that can phosphorylate the 5'-hydroxyl groups of double-stranded RNA (dsRNA), single-stranded RNA (ssRNA), double stranded DNA (dsDNA) and double-stranded DNA:RNA hybrids. dsRNA is phosphorylated more efficiently than dsDNA, and the RNA component of a DNA:RNA hybrid is phosphorylated more efficiently than the DNA component. Plays a role in both tRNA splicing and mRNA 3'-end formation. Component of the tRNA splicing endonuclease complex: phosphorylates the 5'-terminus of the tRNA 3'-exon during tRNA splicing; this phosphorylation event is a prerequisite for the subsequent ligation of the two exon halves and the production of a mature tRNA. Its role in tRNA splicing and maturation is required for cerebellar development. Component of the pre-mRNA cleavage complex II (CF-II), which seems to be required for mRNA 3'-end formation. Also phosphorylates the 5'-terminus of exogenously introduced short interfering RNAs (siRNAs), which is a necessary prerequisite for their incorporation into the RNA-induced silencing complex (RISC). However, endogenous siRNAs and microRNAs (miRNAs) that are produced by the cleavage of dsRNA precursors by dicer1 already contain a 5'-phosphate group, so this protein may be dispensible for normal RNA-mediated gene silencing. This is Polyribonucleotide 5'-hydroxyl-kinase Clp1 from Gallus gallus (Chicken).